The chain runs to 206 residues: Protein GrpE (206 aa).

Positions 1–10 (MTDPDLHQND) are enriched in basic and acidic residues. Residues 1 to 38 (MTDPDLHQNDPENPAQASEPVVSKPYIMPDDPETGSAE) are disordered.

Belongs to the GrpE family. Homodimer.

The protein resides in the cytoplasm. Functionally, participates actively in the response to hyperosmotic and heat shock by preventing the aggregation of stress-denatured proteins, in association with DnaK and GrpE. It is the nucleotide exchange factor for DnaK and may function as a thermosensor. Unfolded proteins bind initially to DnaJ; upon interaction with the DnaJ-bound protein, DnaK hydrolyzes its bound ATP, resulting in the formation of a stable complex. GrpE releases ADP from DnaK; ATP binding to DnaK triggers the release of the substrate protein, thus completing the reaction cycle. Several rounds of ATP-dependent interactions between DnaJ, DnaK and GrpE are required for fully efficient folding. In Bradyrhizobium sp. (strain ORS 278), this protein is Protein GrpE.